A 210-amino-acid polypeptide reads, in one-letter code: Thymidylate kinase (210 aa).

ATP is bound at residue 9 to 16 (GLEGAGKS).

This sequence belongs to the thymidylate kinase family.

It carries out the reaction dTMP + ATP = dTDP + ADP. In terms of biological role, phosphorylation of dTMP to form dTDP in both de novo and salvage pathways of dTTP synthesis. In Aliivibrio fischeri (strain MJ11) (Vibrio fischeri), this protein is Thymidylate kinase.